The primary structure comprises 390 residues: Phosphopentomutase (390 aa).

6 residues coordinate Mn(2+): Asp12, Asp284, His289, Asp325, His326, and His337.

The protein belongs to the phosphopentomutase family. It depends on Mn(2+) as a cofactor.

The protein localises to the cytoplasm. The enzyme catalyses 2-deoxy-alpha-D-ribose 1-phosphate = 2-deoxy-D-ribose 5-phosphate. It carries out the reaction alpha-D-ribose 1-phosphate = D-ribose 5-phosphate. The protein operates within carbohydrate degradation; 2-deoxy-D-ribose 1-phosphate degradation; D-glyceraldehyde 3-phosphate and acetaldehyde from 2-deoxy-alpha-D-ribose 1-phosphate: step 1/2. In terms of biological role, isomerase that catalyzes the conversion of deoxy-ribose 1-phosphate (dRib-1-P) and ribose 1-phosphate (Rib-1-P) to deoxy-ribose 5-phosphate (dRib-5-P) and ribose 5-phosphate (Rib-5-P), respectively. This Macrococcus caseolyticus (strain JCSC5402) (Macrococcoides caseolyticum) protein is Phosphopentomutase.